A 247-amino-acid polypeptide reads, in one-letter code: Segregation and condensation protein A (247 aa).

The protein belongs to the ScpA family. Component of a cohesin-like complex composed of ScpA, ScpB and the Smc homodimer, in which ScpA and ScpB bind to the head domain of Smc. The presence of the three proteins is required for the association of the complex with DNA.

Its subcellular location is the cytoplasm. Participates in chromosomal partition during cell division. May act via the formation of a condensin-like complex containing Smc and ScpB that pull DNA away from mid-cell into both cell halves. The protein is Segregation and condensation protein A of Bacillus cereus (strain ATCC 10987 / NRS 248).